The chain runs to 187 residues: UPF0398 protein LBA1157 (187 aa).

It belongs to the UPF0398 family.

This Lactobacillus acidophilus (strain ATCC 700396 / NCK56 / N2 / NCFM) protein is UPF0398 protein LBA1157.